The sequence spans 131 residues: Small ribosomal subunit protein uS8 (131 aa).

It belongs to the universal ribosomal protein uS8 family. In terms of assembly, part of the 30S ribosomal subunit. Contacts proteins S5 and S12.

Functionally, one of the primary rRNA binding proteins, it binds directly to 16S rRNA central domain where it helps coordinate assembly of the platform of the 30S subunit. This Sulfurovum sp. (strain NBC37-1) protein is Small ribosomal subunit protein uS8.